A 150-amino-acid chain; its full sequence is UPF0756 membrane protein PM0771 (150 aa).

The next 4 helical transmembrane spans lie at 12 to 34 (LVVL…AAIL), 52 to 72 (HGIT…IVSG), 79 to 99 (LAVF…LVAW), and 123 to 143 (ILGV…AGIL).

It belongs to the UPF0756 family.

The protein localises to the cell membrane. The sequence is that of UPF0756 membrane protein PM0771 from Pasteurella multocida (strain Pm70).